We begin with the raw amino-acid sequence, 387 residues long: G2/mitotic-specific cyclin-B2 (387 aa).

Belongs to the cyclin family. Cyclin AB subfamily. As to quaternary structure, interacts with the CDK1 protein kinase to form a serine/threonine kinase holoenzyme complex also known as maturation promoting factor (MPF). The cyclin subunit imparts substrate specificity to the complex.

Its function is as follows. Essential for the control of the cell cycle at the G2/M (mitosis) transition. The sequence is that of G2/mitotic-specific cyclin-B2 (ccnb2) from Oryzias latipes (Japanese rice fish).